A 269-amino-acid chain; its full sequence is 5'-nucleotidase SurE (269 aa).

Asp11, Asp12, Ser43, and Asn101 together coordinate a divalent metal cation.

This sequence belongs to the SurE nucleotidase family. A divalent metal cation serves as cofactor.

The protein resides in the cytoplasm. The catalysed reaction is a ribonucleoside 5'-phosphate + H2O = a ribonucleoside + phosphate. Its function is as follows. Nucleotidase that shows phosphatase activity on nucleoside 5'-monophosphates. The sequence is that of 5'-nucleotidase SurE from Synechococcus sp. (strain CC9902).